The primary structure comprises 336 residues: Holliday junction branch migration complex subunit RuvB (336 aa).

The segment at 1 to 185 (MSIIVERLLS…FGVLSRVEYY (185 aa)) is large ATPase domain (RuvB-L). ATP is bound by residues leucine 24, arginine 25, glycine 66, lysine 69, threonine 70, threonine 71, 132 to 134 (EDF), arginine 175, tyrosine 185, and arginine 222. Position 70 (threonine 70) interacts with Mg(2+). The segment at 186 to 256 (TVDQLSAIVE…ITQMALELLQ (71 aa)) is small ATPAse domain (RuvB-S). Residues 259–336 (KLGLDHIDHK…EHFGMEIPKV (78 aa)) form a head domain (RuvB-H) region. DNA contacts are provided by arginine 314 and arginine 319.

It belongs to the RuvB family. Homohexamer. Forms an RuvA(8)-RuvB(12)-Holliday junction (HJ) complex. HJ DNA is sandwiched between 2 RuvA tetramers; dsDNA enters through RuvA and exits via RuvB. An RuvB hexamer assembles on each DNA strand where it exits the tetramer. Each RuvB hexamer is contacted by two RuvA subunits (via domain III) on 2 adjacent RuvB subunits; this complex drives branch migration. In the full resolvosome a probable DNA-RuvA(4)-RuvB(12)-RuvC(2) complex forms which resolves the HJ.

The protein localises to the cytoplasm. It catalyses the reaction ATP + H2O = ADP + phosphate + H(+). Functionally, the RuvA-RuvB-RuvC complex processes Holliday junction (HJ) DNA during genetic recombination and DNA repair, while the RuvA-RuvB complex plays an important role in the rescue of blocked DNA replication forks via replication fork reversal (RFR). RuvA specifically binds to HJ cruciform DNA, conferring on it an open structure. The RuvB hexamer acts as an ATP-dependent pump, pulling dsDNA into and through the RuvAB complex. RuvB forms 2 homohexamers on either side of HJ DNA bound by 1 or 2 RuvA tetramers; 4 subunits per hexamer contact DNA at a time. Coordinated motions by a converter formed by DNA-disengaged RuvB subunits stimulates ATP hydrolysis and nucleotide exchange. Immobilization of the converter enables RuvB to convert the ATP-contained energy into a lever motion, pulling 2 nucleotides of DNA out of the RuvA tetramer per ATP hydrolyzed, thus driving DNA branch migration. The RuvB motors rotate together with the DNA substrate, which together with the progressing nucleotide cycle form the mechanistic basis for DNA recombination by continuous HJ branch migration. Branch migration allows RuvC to scan DNA until it finds its consensus sequence, where it cleaves and resolves cruciform DNA. This chain is Holliday junction branch migration complex subunit RuvB, found in Bacillus cereus (strain ATCC 14579 / DSM 31 / CCUG 7414 / JCM 2152 / NBRC 15305 / NCIMB 9373 / NCTC 2599 / NRRL B-3711).